An 861-amino-acid polypeptide reads, in one-letter code: Ataxin-7-like protein 1 (861 aa).

5 disordered regions span residues Met1–Thr31, Gly154–Arg189, Lys342–Glu448, Pro606–Pro673, and Phe772–Pro861. The SCA7 domain maps to Arg284–Lys351. Basic and acidic residues predominate over residues Lys342–Leu354. Residues Leu355–Ala369 show a composition bias toward polar residues. Low complexity-rich tracts occupy residues Ser372–Gly381, Ser403–Ser417, and Pro606–His616. Residues Lys617 to Ser627 are compositionally biased toward basic residues. The segment covering Lys628 to Ser641 has biased composition (basic and acidic residues). Low complexity-rich tracts occupy residues Gln648–Ser671 and Ser783–Lys794. The span at Val817–Asn828 shows a compositional bias: polar residues. Residues Ser829–Ser847 are compositionally biased toward low complexity.

This is Ataxin-7-like protein 1 (ATXN7L1) from Homo sapiens (Human).